The chain runs to 150 residues: Actin-related protein 2/3 complex subunit 5-C (150 aa).

A disordered region spans residues 21–45; that stretch reads NKFVDEEEAGEGQQGPDEGEVDSAI.

The protein belongs to the ARPC5 family. In terms of assembly, component of the Arp2/3 complex composed of actr2/arp2, actr3/arp3, arpc1 (arpc1a or arpc1b), arpc2, arpc3, arpc4 and arpc5.

The protein resides in the cytoplasm. It localises to the cytoskeleton. It is found in the cell projection. The protein localises to the nucleus. Functionally, component of the Arp2/3 complex, a multiprotein complex that mediates actin polymerization upon stimulation by nucleation-promoting factor (NPF). The Arp2/3 complex mediates the formation of branched actin networks in the cytoplasm, providing the force for cell motility. In addition to its role in the cytoplasmic cytoskeleton, the Arp2/3 complex also promotes actin polymerization in the nucleus, thereby regulating gene transcription and repair of damaged DNA. The Arp2/3 complex promotes homologous recombination (HR) repair in response to DNA damage by promoting nuclear actin polymerization, leading to drive motility of double-strand breaks (DSBs). This is Actin-related protein 2/3 complex subunit 5-C (arpc5-c) from Xenopus laevis (African clawed frog).